We begin with the raw amino-acid sequence, 206 residues long: Small ribosomal subunit protein uS4 (206 aa).

The 63-residue stretch at 96-158 folds into the S4 RNA-binding domain; the sequence is SRLDNVVYRM…AKKQLRIQNA (63 aa).

This sequence belongs to the universal ribosomal protein uS4 family. As to quaternary structure, part of the 30S ribosomal subunit. Contacts protein S5. The interaction surface between S4 and S5 is involved in control of translational fidelity.

Its function is as follows. One of the primary rRNA binding proteins, it binds directly to 16S rRNA where it nucleates assembly of the body of the 30S subunit. Functionally, with S5 and S12 plays an important role in translational accuracy. This chain is Small ribosomal subunit protein uS4, found in Francisella tularensis subsp. mediasiatica (strain FSC147).